Reading from the N-terminus, the 378-residue chain is Erythronate-4-phosphate dehydrogenase (378 aa).

Positions 45 and 66 each coordinate substrate. Asp146 and Thr175 together coordinate NAD(+). Arg208 is a catalytic residue. Asp232 contributes to the NAD(+) binding site. Glu237 is a catalytic residue. His254 (proton donor) is an active-site residue. Gly257 contributes to the NAD(+) binding site. Tyr258 is a substrate binding site.

It belongs to the D-isomer specific 2-hydroxyacid dehydrogenase family. PdxB subfamily. As to quaternary structure, homodimer.

Its subcellular location is the cytoplasm. It catalyses the reaction 4-phospho-D-erythronate + NAD(+) = (R)-3-hydroxy-2-oxo-4-phosphooxybutanoate + NADH + H(+). The protein operates within cofactor biosynthesis; pyridoxine 5'-phosphate biosynthesis; pyridoxine 5'-phosphate from D-erythrose 4-phosphate: step 2/5. Functionally, catalyzes the oxidation of erythronate-4-phosphate to 3-hydroxy-2-oxo-4-phosphonooxybutanoate. The protein is Erythronate-4-phosphate dehydrogenase of Escherichia coli (strain 55989 / EAEC).